Consider the following 102-residue polypeptide: Large ribosomal subunit protein bL21 (102 aa).

The protein belongs to the bacterial ribosomal protein bL21 family. Part of the 50S ribosomal subunit. Contacts protein L20.

This protein binds to 23S rRNA in the presence of protein L20. The protein is Large ribosomal subunit protein bL21 of Lawsonia intracellularis.